The chain runs to 142 residues: DNA-directed RNA polymerase subunit omega (142 aa).

Positions 93 to 142 (AWSVPEAGGDEGGDASELLDDEGEGAAAGAEPDFSEMDVPLADLADEDKI) are disordered. Acidic residues predominate over residues 100–116 (GGDEGGDASELLDDEGE).

The protein belongs to the RNA polymerase subunit omega family. As to quaternary structure, the RNAP catalytic core consists of 2 alpha, 1 beta, 1 beta' and 1 omega subunit. When a sigma factor is associated with the core the holoenzyme is formed, which can initiate transcription.

The catalysed reaction is RNA(n) + a ribonucleoside 5'-triphosphate = RNA(n+1) + diphosphate. Its function is as follows. Promotes RNA polymerase assembly. Latches the N- and C-terminal regions of the beta' subunit thereby facilitating its interaction with the beta and alpha subunits. This is DNA-directed RNA polymerase subunit omega from Rhodospirillum centenum (strain ATCC 51521 / SW).